Reading from the N-terminus, the 509-residue chain is Probable xyloglucan galactosyltransferase GT12 (509 aa).

Residues 1-3 lie on the Cytoplasmic side of the membrane; it reads MMK. Residues 4-24 traverse the membrane as a helical; Signal-anchor for type II membrane protein segment; sequence PVPKLWVVISSAFVFCLLVLF. Topologically, residues 25-509 are lumenal; the sequence is QINKSDLIEA…KLEIIHEKTA (485 aa). Residues asparagine 27, asparagine 59, asparagine 65, asparagine 169, asparagine 170, asparagine 195, asparagine 257, and asparagine 416 are each glycosylated (N-linked (GlcNAc...) asparagine).

Belongs to the glycosyltransferase 47 family. Expressed in pollen grains.

Its subcellular location is the golgi apparatus membrane. In terms of biological role, functions in xyloglucan synthesis by adding side chains to the xylosylated glucan backbone. Involved in the galactosylation of hemicellulose xyloglucan. This chain is Probable xyloglucan galactosyltransferase GT12, found in Arabidopsis thaliana (Mouse-ear cress).